Consider the following 281-residue polypeptide: Src-like-adapter (281 aa).

Residues 1-20 (MGNSMKSTSPPSERPLSSSE) form a disordered region. A lipid anchor (N-myristoyl glycine) is attached at G2. Residues 7–20 (STSPPSERPLSSSE) are compositionally biased toward low complexity. The SH3 domain occupies 22 to 82 (LESDFLAVLT…PGICVARVYH (61 aa)). The 92-residue stretch at 84–175 (WLFEGLGRDK…GLCCVLTTPC (92 aa)) folds into the SH2 domain. The interval 190–281 (CTSPGSPVTL…FFSAPQYFED (92 aa)) is SLA C-terminal. S258 is subject to Phosphoserine. Y278 bears the Phosphotyrosine mark.

In terms of assembly, homodimer. Interacts with phosphorylated CBL, SYK and LAT. Homodimerization and interaction with phosphorylated CBL occurs via its C-terminal domain. Interacts with PDGFRB and EPHA2. Interacts with phosphorylated proteins ZAP70; CD3Z; VAV1 and LCP2 via its SH2 domain. Predominantly expressed in lymphoid tissues. Highly expressed in spleen, thymus and lymph nodes. Weakly expressed in lung and brain. Expressed in T-cells and at low level in B-cells.

The protein resides in the cytoplasm. It localises to the endosome. Adapter protein, which negatively regulates T-cell receptor (TCR) signaling. Inhibits T-cell antigen-receptor induced activation of nuclear factor of activated T-cells. Involved in the negative regulation of positive selection and mitosis of T-cells. May act by linking signaling proteins such as ZAP70 with CBL, leading to a CBL dependent degradation of signaling proteins. This is Src-like-adapter (Sla) from Mus musculus (Mouse).